The chain runs to 274 residues: Tail assembly protein Gp25 (274 aa).

The tract at residues 221 to 250 (NRDPKKPKPKAPKAYPRPDDFEKTTPKPGS) is disordered. Over residues 236-245 (PRPDDFEKTT) the composition is skewed to basic and acidic residues.

This sequence belongs to the L5likevirus tail assembly protein family. As to quaternary structure, interacts with tail assembly protein Gp24 and tape measure protein.

In terms of biological role, promotes tail assembly by creating a scaffold for the tail tube proteins. The tail assembly proteins Gp24 and Gp25 would wrap the linear tape measure protein to create a tail assembly scaffold. It would allow polymerization of tail tube protein during which Gp24 and Gp25 are released and therefore are absent from the mature virion. The tail assembly protein Gp25 is produced by a rare -1 ribosomal frameshift. The ratio Gp24/Gp25 is important for proper tail assembly. The protein is Tail assembly protein Gp25 (25) of Mycobacterium phage D29 (Mycobacteriophage D29).